A 236-amino-acid polypeptide reads, in one-letter code: Large ribosomal subunit protein uL1 (236 aa).

Belongs to the universal ribosomal protein uL1 family. In terms of assembly, part of the 50S ribosomal subunit.

Binds directly to 23S rRNA. The L1 stalk is quite mobile in the ribosome, and is involved in E site tRNA release. In terms of biological role, protein L1 is also a translational repressor protein, it controls the translation of the L11 operon by binding to its mRNA. The chain is Large ribosomal subunit protein uL1 from Corynebacterium glutamicum (strain R).